The sequence spans 600 residues: Torsin-1A-interacting protein 1 (600 aa).

The span at 1-14 (MAGEGQRAEPEREG) shows a compositional bias: basic and acidic residues. Disordered stretches follow at residues 1-261 (MAGE…YKES) and 310-346 (MRSI…QPKS). The Nuclear segment spans residues 1–354 (MAGEGQRAEP…KSVSSVKTKR (354 aa)). The residue at position 61 (Ser-61) is a Phosphoserine. Basic and acidic residues-rich tracts occupy residues 71–81 (FEPRAAKEKAR), 91–102 (FRPDSAKEEVRE), and 116–125 (RLHEAEEMQT). Ser-137, Ser-145, Ser-156, Ser-158, Ser-159, and Ser-189 each carry phosphoserine. Low complexity predominate over residues 192–203 (PLISLRRPPLRS). The segment covering 219–232 (EEGETEENDQDSFD) has biased composition (acidic residues). Thr-223 bears the Phosphothreonine mark. Residues Ser-230, Ser-233, and Ser-244 each carry the phosphoserine modification. The span at 247–261 (SGDQTTRSSSQYKES) shows a compositional bias: polar residues. Phosphoserine is present on Ser-322. Lys-325 is covalently cross-linked (Glycyl lysine isopeptide (Lys-Gly) (interchain with G-Cter in SUMO2)). Positions 325 to 346 (KSELGNQSPSTSNQQMTGQPKS) are enriched in polar residues. Ser-332 carries the post-translational modification Phosphoserine. The helical transmembrane segment at 355-371 (YWPFAVIAALLIGGFLY) threads the bilayer. The Perinuclear space segment spans residues 372 to 600 (TRPPEAETTA…ENDLKKGICL (229 aa)). Residues 373-600 (RPPEAETTAV…ENDLKKGICL (228 aa)) form an interaction with TOR1A region. The stretch at 376-452 (EAETTAVQEF…SEQIADAYSS (77 aa)) forms a coiled coil. Asn-416 is a glycosylation site (N-linked (GlcNAc...) asparagine).

It belongs to the TOR1AIP family. Interacts with ATP1B4. Interacts with TOR1A (ATP-bound). Interacts with TOR1B, TOR2A and TOR3A. Interacts with VIM.

It localises to the nucleus inner membrane. In terms of biological role, required for nuclear membrane integrity. Induces TOR1A and TOR1B ATPase activity and is required for their location on the nuclear membrane. Binds to A- and B-type lamins. Possible role in membrane attachment and assembly of the nuclear lamina. In Bos taurus (Bovine), this protein is Torsin-1A-interacting protein 1 (TOR1AIP1).